Consider the following 63-residue polypeptide: Probable rubredoxin (63 aa).

The Rubredoxin-like domain occupies 11–62 (MKRYKCRVCGYIYDPEKGEPRTDTPPGTPFEDLPETWRCPSCGAKKKMFKPL). The Fe cation site is built by C16, C19, C49, and C52.

Belongs to the rubredoxin family. It depends on Fe(3+) as a cofactor.

Rubredoxin is a small nonheme, iron protein lacking acid-labile sulfide. Its single Fe, chelated to 4 Cys, functions as an electron acceptor and may also stabilize the conformation of the molecule. This chain is Probable rubredoxin, found in Methanothermobacter thermautotrophicus (strain ATCC 29096 / DSM 1053 / JCM 10044 / NBRC 100330 / Delta H) (Methanobacterium thermoautotrophicum).